A 397-amino-acid chain; its full sequence is Thioredoxin-interacting protein (397 aa).

A Glycyl lysine isopeptide (Lys-Gly) (interchain with G-Cter in ubiquitin) cross-link involves residue lysine 213. Residue serine 362 is modified to Phosphoserine.

It belongs to the arrestin family. As to quaternary structure, homodimer; disulfide-linked. Interacts with TXN/thioredoxin through its redox-active site. Interacts with transcriptional repressors ZBTB16, ZBTB32 and HDAC1. Interacts with DDIT4. Ubiquitinated; undergoes heterotypic 'Lys-48'-/'Lys-63'-branched polyubiquitination catalyzed by ITCH and UBR5 resulting in proteasomal degradation. Deubiquitinated by USP5, leading to TXNIP stabilization. Ubiquitously expressed.

It localises to the cytoplasm. Its function is as follows. May act as an oxidative stress mediator by inhibiting thioredoxin activity or by limiting its bioavailability. Interacts with COPS5 and restores COPS5-induced suppression of CDKN1B stability, blocking the COPS5-mediated translocation of CDKN1B from the nucleus to the cytoplasm. Functions as a transcriptional repressor, possibly by acting as a bridge molecule between transcription factors and corepressor complexes, and over-expression will induce G0/G1 cell cycle arrest. Required for the maturation of natural killer cells. Acts as a suppressor of tumor cell growth. Inhibits the proteasomal degradation of DDIT4, and thereby contributes to the inhibition of the mammalian target of rapamycin complex 1 (mTORC1). The chain is Thioredoxin-interacting protein (Txnip) from Mus musculus (Mouse).